The following is a 145-amino-acid chain: Small ribosomal subunit protein eS19 (145 aa).

Residue Lys-23 is modified to N6-acetyllysine. Residue Arg-67 is modified to Omega-N-methylarginine. N6-acetyllysine is present on residues Lys-111 and Lys-115. Residue Lys-143 is modified to N6-succinyllysine.

This sequence belongs to the eukaryotic ribosomal protein eS19 family. In terms of assembly, component of the small ribosomal subunit. Part of the small subunit (SSU) processome, composed of more than 70 proteins and the RNA chaperone small nucleolar RNA (snoRNA) U3. Interacts with RPS19BP1.

It localises to the cytoplasm. The protein localises to the nucleus. It is found in the nucleolus. Functionally, component of the small ribosomal subunit. The ribosome is a large ribonucleoprotein complex responsible for the synthesis of proteins in the cell. Required for pre-rRNA processing and maturation of 40S ribosomal subunits. Part of the small subunit (SSU) processome, first precursor of the small eukaryotic ribosomal subunit. During the assembly of the SSU processome in the nucleolus, many ribosome biogenesis factors, an RNA chaperone and ribosomal proteins associate with the nascent pre-rRNA and work in concert to generate RNA folding, modifications, rearrangements and cleavage as well as targeted degradation of pre-ribosomal RNA by the RNA exosome. This chain is Small ribosomal subunit protein eS19 (Rps19), found in Rattus norvegicus (Rat).